The sequence spans 159 residues: 2-C-methyl-D-erythritol 2,4-cyclodiphosphate synthase (159 aa).

2 residues coordinate a divalent metal cation: Asp-8 and His-10. 4-CDP-2-C-methyl-D-erythritol 2-phosphate contacts are provided by residues 8–10 and 34–35; these read DVH and HS. An a divalent metal cation-binding site is contributed by His-42. 4-CDP-2-C-methyl-D-erythritol 2-phosphate is bound by residues 56-58, 61-65, 100-106, 132-135, Phe-139, and Arg-142; these read DIG, FPDTD, AQEPKMA, and TTTE.

Belongs to the IspF family. Homotrimer. A divalent metal cation is required as a cofactor.

It catalyses the reaction 4-CDP-2-C-methyl-D-erythritol 2-phosphate = 2-C-methyl-D-erythritol 2,4-cyclic diphosphate + CMP. It participates in isoprenoid biosynthesis; isopentenyl diphosphate biosynthesis via DXP pathway; isopentenyl diphosphate from 1-deoxy-D-xylulose 5-phosphate: step 4/6. Functionally, involved in the biosynthesis of isopentenyl diphosphate (IPP) and dimethylallyl diphosphate (DMAPP), two major building blocks of isoprenoid compounds. Catalyzes the conversion of 4-diphosphocytidyl-2-C-methyl-D-erythritol 2-phosphate (CDP-ME2P) to 2-C-methyl-D-erythritol 2,4-cyclodiphosphate (ME-CPP) with a corresponding release of cytidine 5-monophosphate (CMP). The polypeptide is 2-C-methyl-D-erythritol 2,4-cyclodiphosphate synthase (Alkaliphilus metalliredigens (strain QYMF)).